Consider the following 226-residue polypeptide: MLLHIPGVFTRDEVGRIREALEQADWADGKITAGYQSAKAKHNLQLPEGHPLAQEIGAAMLDRLWQNPLFMSAALPHKVFPPLINCYTAGGSFDFHIDNAVRQPKGSPERVRTDLSSTLFFSDPEDYEGGELEIQDTFGLQRVKLPAGDMVLYPGTSLHKVNPVTRGARYASFFWTQSLVREDSQRALLFEMDGAIQELTRDVPDHPSLVRLTGTYHNLLRRWVEV.

A Fe2OG dioxygenase domain is found at 78–178; it reads KVFPPLINCY…RYASFFWTQS (101 aa). The Fe cation site is built by histidine 96, aspartate 98, and histidine 159. Arginine 169 contributes to the 2-oxoglutarate binding site.

It depends on Fe(2+) as a cofactor. L-ascorbate is required as a cofactor.

In Pseudomonas fluorescens (strain ATCC BAA-477 / NRRL B-23932 / Pf-5), this protein is PKHD-type hydroxylase PFL_0865.